Reading from the N-terminus, the 185-residue chain is uncharacterized protein (185 aa).

In terms of tissue distribution, component of the acid-insoluble and acid-soluble organic matrix of calcified layers of the shell (at protein level).

It is found in the secreted. This is an uncharacterized protein from Lottia gigantea (Giant owl limpet).